The primary structure comprises 122 residues: Small ribosomal subunit protein uS13 (122 aa).

The segment at 99–122 (RGQRTHTNARTRKGPAKAIAGKKK) is disordered.

This sequence belongs to the universal ribosomal protein uS13 family. Part of the 30S ribosomal subunit. Forms a loose heterodimer with protein S19. Forms two bridges to the 50S subunit in the 70S ribosome.

Its function is as follows. Located at the top of the head of the 30S subunit, it contacts several helices of the 16S rRNA. In the 70S ribosome it contacts the 23S rRNA (bridge B1a) and protein L5 of the 50S subunit (bridge B1b), connecting the 2 subunits; these bridges are implicated in subunit movement. Contacts the tRNAs in the A and P-sites. This chain is Small ribosomal subunit protein uS13, found in Rhodopseudomonas palustris (strain BisB5).